The sequence spans 96 residues: Small ribosomal subunit protein bS6 (96 aa).

Belongs to the bacterial ribosomal protein bS6 family.

Its function is as follows. Binds together with bS18 to 16S ribosomal RNA. This is Small ribosomal subunit protein bS6 from Streptomyces griseus subsp. griseus (strain JCM 4626 / CBS 651.72 / NBRC 13350 / KCC S-0626 / ISP 5235).